We begin with the raw amino-acid sequence, 382 residues long: L-lysine 4-hydroxylase (382 aa).

3 residues coordinate Fe cation: His182, Glu184, and His318.

The protein belongs to the clavaminate synthase family. Requires Fe(2+) as cofactor.

It catalyses the reaction L-lysine + 2-oxoglutarate + O2 = (4R)-4-hydroxy-L-lysine + succinate + CO2. Alpha-ketoglutarate-dependent dioxygenase that in vitro catalyzes the regio- and stereoselective hydroxylation of L-lysine, leading to (4R)-4-hydroxy-L-lysine. Cannot use D-lysine or L-ornithine as substrate. The protein is L-lysine 4-hydroxylase of Chitinophaga pinensis (strain ATCC 43595 / DSM 2588 / LMG 13176 / NBRC 15968 / NCIMB 11800 / UQM 2034).